We begin with the raw amino-acid sequence, 602 residues long: Elongation factor 4 (602 aa).

A tr-type G domain is found at 2 to 184; the sequence is NHIRNFSIIA…LIVAKVPAPR (183 aa). GTP-binding positions include 14–19 and 131–134; these read DHGKST and NKMD.

It belongs to the TRAFAC class translation factor GTPase superfamily. Classic translation factor GTPase family. LepA subfamily.

Its subcellular location is the cell inner membrane. It catalyses the reaction GTP + H2O = GDP + phosphate + H(+). Required for accurate and efficient protein synthesis under certain stress conditions. May act as a fidelity factor of the translation reaction, by catalyzing a one-codon backward translocation of tRNAs on improperly translocated ribosomes. Back-translocation proceeds from a post-translocation (POST) complex to a pre-translocation (PRE) complex, thus giving elongation factor G a second chance to translocate the tRNAs correctly. Binds to ribosomes in a GTP-dependent manner. This is Elongation factor 4 from Paracidovorax citrulli (strain AAC00-1) (Acidovorax citrulli).